Here is a 134-residue protein sequence, read N- to C-terminus: Global transcriptional regulator Spx (134 aa).

A disulfide bridge links cysteine 10 with cysteine 13.

This sequence belongs to the ArsC family. Spx subfamily. As to quaternary structure, interacts with the C-terminal domain of the alpha subunit of the RNAP.

It is found in the cytoplasm. Global transcriptional regulator that plays a key role in stress response and exerts either positive or negative regulation of genes. Acts by interacting with the C-terminal domain of the alpha subunit of the RNA polymerase (RNAP). This interaction can enhance binding of RNAP to the promoter region of target genes and stimulate their transcription, or block interaction of RNAP with activator. In Streptococcus pyogenes serotype M3 (strain ATCC BAA-595 / MGAS315), this protein is Global transcriptional regulator Spx.